Reading from the N-terminus, the 84-residue chain is Cell division topological specificity factor (84 aa).

This sequence belongs to the MinE family.

Functionally, prevents the cell division inhibition by proteins MinC and MinD at internal division sites while permitting inhibition at polar sites. This ensures cell division at the proper site by restricting the formation of a division septum at the midpoint of the long axis of the cell. This chain is Cell division topological specificity factor, found in Paraburkholderia phymatum (strain DSM 17167 / CIP 108236 / LMG 21445 / STM815) (Burkholderia phymatum).